Reading from the N-terminus, the 256-residue chain is Alcohol dehydrogenase (256 aa).

An NAD(+)-binding site is contributed by 12–41 (FVAGLGGIGLDTTKELLKRDLKNLVILDRI). Ser-140 contacts substrate. Tyr-153 serves as the catalytic Proton acceptor.

This sequence belongs to the short-chain dehydrogenases/reductases (SDR) family. In terms of assembly, homodimer.

It carries out the reaction a primary alcohol + NAD(+) = an aldehyde + NADH + H(+). It catalyses the reaction a secondary alcohol + NAD(+) = a ketone + NADH + H(+). The chain is Alcohol dehydrogenase from Drosophila ananassae (Fruit fly).